Consider the following 95-residue polypeptide: MSIKPLHDRVVVKPIEADEVSAGGIVIPDSAKEKSTKGEVVAIGAGKPLDNGSLRAPVVKVGDKVIYGQYAGSSYKSEGVEYKVLREDDILAVIG.

The protein belongs to the GroES chaperonin family. As to quaternary structure, heptamer of 7 subunits arranged in a ring. Interacts with the chaperonin GroEL.

The protein localises to the cytoplasm. In terms of biological role, together with the chaperonin GroEL, plays an essential role in assisting protein folding. The GroEL-GroES system forms a nano-cage that allows encapsulation of the non-native substrate proteins and provides a physical environment optimized to promote and accelerate protein folding. GroES binds to the apical surface of the GroEL ring, thereby capping the opening of the GroEL channel. This is Co-chaperonin GroES from Xanthomonas axonopodis pv. citri (strain 306).